Reading from the N-terminus, the 230-residue chain is Small ribosomal subunit protein uS7B (230 aa).

The segment at 1–22 is disordered; that stretch reads MSEEVVESSSQEASQVIPQEQE. The span at 7-16 shows a compositional bias: low complexity; that stretch reads ESSSQEASQV.

This sequence belongs to the universal ribosomal protein uS7 family.

This is Small ribosomal subunit protein uS7B (RpS5b) from Drosophila melanogaster (Fruit fly).